We begin with the raw amino-acid sequence, 398 residues long: Acetyl-CoA acetyltransferase (398 aa).

Serine 2 carries the N-acetylserine modification. Cysteine 91 (acyl-thioester intermediate) is an active-site residue. Residues tyrosine 186 and lysine 231 each coordinate CoA. Tyrosine 186 provides a ligand contact to K(+). K(+)-binding residues include alanine 248, alanine 249, and alanine 251. Serine 252 serves as a coordination point for CoA. Residue valine 350 participates in K(+) binding. Active-site proton acceptor residues include histidine 354 and cysteine 384.

The protein belongs to the thiolase-like superfamily. Thiolase family. In terms of assembly, homotetramer.

It is found in the cytoplasm. It carries out the reaction 2 acetyl-CoA = acetoacetyl-CoA + CoA. The protein operates within metabolic intermediate biosynthesis; (R)-mevalonate biosynthesis; (R)-mevalonate from acetyl-CoA: step 1/3. Acetyl-CoA acetyltransferase; part of the first module of ergosterol biosynthesis pathway that includes the early steps of the pathway, conserved across all eukaryotes, and which results in the formation of mevalonate from acetyl-coenzyme A (acetyl-CoA). In this module, the acetyl-CoA acetyltransferase ERG10 catalyzes the formation of acetoacetyl-CoA. The hydroxymethylglutaryl-CoA synthase ERG13 then condenses acetyl-CoA with acetoacetyl-CoA to form HMG-CoA. The rate-limiting step of the early module is the reduction to mevalonate by the 3-hydroxy-3-methylglutaryl-coenzyme A (HMG-CoA) reductases HMG1 and HMG2 which are derived from a single ancestral HMGR gene by gene duplication. This chain is Acetyl-CoA acetyltransferase, found in Saccharomyces pastorianus (strain ATCC 76670 / Carlsberg bottom yeast no.2 / CBS 1503 / CLIB 180 / NBRC 10610 / NRRL Y-1525) (Saaz-type lager yeast).